A 485-amino-acid chain; its full sequence is Probable cobyric acid synthase (485 aa).

The GATase cobBQ-type domain maps to 250–435; it reads EIEVAVIRLP…LHGLFDNRNI (186 aa). The Nucleophile role is filled by Cys328. Residue His427 is part of the active site.

The protein belongs to the CobB/CobQ family. CobQ subfamily.

The protein operates within cofactor biosynthesis; adenosylcobalamin biosynthesis. Its function is as follows. Catalyzes amidations at positions B, D, E, and G on adenosylcobyrinic A,C-diamide. NH(2) groups are provided by glutamine, and one molecule of ATP is hydrogenolyzed for each amidation. This chain is Probable cobyric acid synthase, found in Methanosarcina mazei (strain ATCC BAA-159 / DSM 3647 / Goe1 / Go1 / JCM 11833 / OCM 88) (Methanosarcina frisia).